Here is a 98-residue protein sequence, read N- to C-terminus: Aspartyl/glutamyl-tRNA(Asn/Gln) amidotransferase subunit C (98 aa).

A disordered region spans residues 75–98 (EQALSGAPDSDDNRFKVPAILDEA).

This sequence belongs to the GatC family. Heterotrimer of A, B and C subunits.

The enzyme catalyses L-glutamyl-tRNA(Gln) + L-glutamine + ATP + H2O = L-glutaminyl-tRNA(Gln) + L-glutamate + ADP + phosphate + H(+). It carries out the reaction L-aspartyl-tRNA(Asn) + L-glutamine + ATP + H2O = L-asparaginyl-tRNA(Asn) + L-glutamate + ADP + phosphate + 2 H(+). Functionally, allows the formation of correctly charged Asn-tRNA(Asn) or Gln-tRNA(Gln) through the transamidation of misacylated Asp-tRNA(Asn) or Glu-tRNA(Gln) in organisms which lack either or both of asparaginyl-tRNA or glutaminyl-tRNA synthetases. The reaction takes place in the presence of glutamine and ATP through an activated phospho-Asp-tRNA(Asn) or phospho-Glu-tRNA(Gln). The protein is Aspartyl/glutamyl-tRNA(Asn/Gln) amidotransferase subunit C of Pseudarthrobacter chlorophenolicus (strain ATCC 700700 / DSM 12829 / CIP 107037 / JCM 12360 / KCTC 9906 / NCIMB 13794 / A6) (Arthrobacter chlorophenolicus).